The chain runs to 154 residues: NADPH-dependent 7-cyano-7-deazaguanine reductase (154 aa).

The interval 1-24 is disordered; sequence MPKTDVSGLSQLGTKVDLPQSPEE. Catalysis depends on cysteine 52, which acts as the Thioimide intermediate. Aspartate 59 functions as the Proton donor in the catalytic mechanism. Residues 74-76 and 93-94 each bind substrate; these read VES and HE.

The protein belongs to the GTP cyclohydrolase I family. QueF type 1 subfamily.

The protein localises to the cytoplasm. The enzyme catalyses 7-aminomethyl-7-carbaguanine + 2 NADP(+) = 7-cyano-7-deazaguanine + 2 NADPH + 3 H(+). The protein operates within tRNA modification; tRNA-queuosine biosynthesis. Catalyzes the NADPH-dependent reduction of 7-cyano-7-deazaguanine (preQ0) to 7-aminomethyl-7-deazaguanine (preQ1). This chain is NADPH-dependent 7-cyano-7-deazaguanine reductase, found in Sinorhizobium fredii (strain NBRC 101917 / NGR234).